The sequence spans 218 residues: Adenylate kinase (218 aa).

10-15 (GAGKGT) is an ATP binding site. The interval 30-59 (STGDMLRAAVKAGTPLGLEAKKVMDAGGLV) is NMP. Residues Thr-31, Arg-36, 57–59 (GLV), 85–88 (GFPR), and Gln-92 each bind AMP. Residues 122 to 159 (GRRVHPASGRSYHVRFNPPKAEGVDDVTGEPLVQRDDD) are LID. Residues Arg-123 and 132–133 (SY) contribute to the ATP site. AMP contacts are provided by Arg-156 and Arg-167. Gly-203 lines the ATP pocket.

The protein belongs to the adenylate kinase family. Monomer.

The protein localises to the cytoplasm. The catalysed reaction is AMP + ATP = 2 ADP. Its pathway is purine metabolism; AMP biosynthesis via salvage pathway; AMP from ADP: step 1/1. Catalyzes the reversible transfer of the terminal phosphate group between ATP and AMP. Plays an important role in cellular energy homeostasis and in adenine nucleotide metabolism. This Bordetella bronchiseptica (strain ATCC BAA-588 / NCTC 13252 / RB50) (Alcaligenes bronchisepticus) protein is Adenylate kinase.